The sequence spans 321 residues: D-alanine--D-alanine ligase (321 aa).

The 195-residue stretch at 121–315 (RSWFLTNNIN…FVNLIEEILK (195 aa)) folds into the ATP-grasp domain. 148–199 (IKRPYVIKPFTQGSSIGVEVIFEEDDFNFANYDFPYGDEVIIEKYIKGRELQ) lines the ATP pocket. Positions 268, 282, and 284 each coordinate Mg(2+).

Belongs to the D-alanine--D-alanine ligase family. The cofactor is Mg(2+). It depends on Mn(2+) as a cofactor.

The protein localises to the cytoplasm. It carries out the reaction 2 D-alanine + ATP = D-alanyl-D-alanine + ADP + phosphate + H(+). It participates in cell wall biogenesis; peptidoglycan biosynthesis. Functionally, cell wall formation. This Rickettsia bellii (strain RML369-C) protein is D-alanine--D-alanine ligase.